The chain runs to 78 residues: Leukemia-associated protein 1 (78 aa).

Functionally, may act as a tumor suppressor. The sequence is that of Leukemia-associated protein 1 (DLEU1) from Homo sapiens (Human).